The chain runs to 289 residues: MKVLVNDRLVERNDATVDVEDRGYQFGDGVYEVVRLYNGKFFTYNEHIDRLYASAAKIDLVIPYSKETLRALLDKLVAENNINTGNVYLQVTRGVQNPRNHVLPDDFPLEGVLTAAAREVPRNERQFIEGGSAITEEDVRWLRCDIKSLNLLGNILAKNKAHQQNALEAILHRGEQVTECSASNVSIIKDGVLWTHAADNLILNGITRQVIIDVAKKNGIPVKEADFTLTDLREADEVFISSTTIEITPITHIDGVQVADGKRGPITAQLHNYFVEEIVRACGELEYAK.

Tyr31 provides a ligand contact to substrate. Arg50 provides a ligand contact to pyridoxal 5'-phosphate. Substrate-binding residues include Arg99 and His101. Lys147 acts as the Proton acceptor in catalysis. Lys147 is modified (N6-(pyridoxal phosphate)lysine). Glu179 is a binding site for pyridoxal 5'-phosphate.

This sequence belongs to the class-IV pyridoxal-phosphate-dependent aminotransferase family. As to quaternary structure, homodimer. Pyridoxal 5'-phosphate is required as a cofactor.

It carries out the reaction D-alanine + 2-oxoglutarate = D-glutamate + pyruvate. Its function is as follows. Acts on the D-isomers of alanine, leucine, aspartate, glutamate, aminobutyrate, norvaline and asparagine. The enzyme transfers an amino group from a substrate D-amino acid to the pyridoxal phosphate cofactor to form pyridoxamine and an alpha-keto acid in the first half-reaction. The second half-reaction is the reverse of the first, transferring the amino group from the pyridoxamine to a second alpha-keto acid to form the product D-amino acid via a ping-pong mechanism. This is an important process in the formation of D-alanine and D-glutamate, which are essential bacterial cell wall components. This chain is D-alanine aminotransferase (dat), found in Listeria innocua serovar 6a (strain ATCC BAA-680 / CLIP 11262).